Reading from the N-terminus, the 499-residue chain is Glutelin type-A 1 (499 aa).

The N-terminal stretch at 1–24 (MASINRPIVFFTVCLFLLCNGSLA) is a signal peptide. 2 disulfide bridges follow: Cys-46/Cys-79 and Cys-122/Cys-313. Cupin type-1 domains lie at 51–248 (LQAF…QVAR) and 319–468 (QNID…EEAQ).

The protein belongs to the 11S seed storage protein (globulins) family. As to quaternary structure, hexamer; each subunit is composed of an acidic and a basic chain derived from a single precursor and linked by a disulfide bond.

Its function is as follows. Seed storage protein. The protein is Glutelin type-A 1 (GLUA1) of Oryza sativa subsp. japonica (Rice).